We begin with the raw amino-acid sequence, 356 residues long: MAHKLLIINPGSTSTKIGVFEDENLIFEETLRHSAEEIGKYSNVYEQFPFRKEVILNVLKEKGFDINTLDAIVGRGGLLKPVEGGTYEVNDAMLKDLRESVRGEHASNLGGIIGNEIAKSLNIPAFIVDPVVVDELQDIARISGMPEIERTSIFHALNQKAVARRYAKENNKSYEDVNIVVVHMGGGSSVGAHKNGKIIDVNNALDGEGPFSPERSGGVPIGDLVRLCYSGKYTLDEIIKKINGKGGAVAYLGTNDFREVEEKALAGDEKYKLILDAFIYQISKEIGKCSVVLEGNVDAIVLTGGIAYSKYVTKEIENKVKFIAPVVLYPGEDELLALTQGGLRVLNGEEKAKEYK.

This sequence belongs to the acetokinase family.

Its subcellular location is the cytoplasm. The enzyme catalyses butanoate + ATP = butanoyl phosphate + ADP. It functions in the pathway lipid metabolism; butanoate metabolism. Catalyzes the conversion of butyryl-CoA through butyryl phosphate to butyrate. In Clostridium tetani (strain Massachusetts / E88), this protein is Butyrate kinase.